The chain runs to 486 residues: Zinc finger chaperone ZPR1 (486 aa).

The interval 1–31 (MSEQKEDLFKPVGEAAAEVEDESIAEQNKAN) is disordered. A Phosphoserine modification is found at Ser23. C4-type zinc fingers lie at residues 54-86 (CMNC…CPHC) and 295-327 (CPSC…CDHC). Thr407 is modified (phosphothreonine).

Belongs to the ZPR1 family. In terms of assembly, interacts with elongation factor 1-alpha.

It is found in the cytoplasm. It localises to the nucleus. Acts as a protein folding chaperone for elongation factor 1-alpha. This is Zinc finger chaperone ZPR1 from Saccharomyces cerevisiae (strain ATCC 204508 / S288c) (Baker's yeast).